A 60-amino-acid polypeptide reads, in one-letter code: Probable UDP-arabinopyranose mutase 1 (60 aa).

The protein belongs to the RGP family. As to quaternary structure, homopentamer or homohexamer. Mn(2+) serves as cofactor. Requires Mg(2+) as cofactor.

The protein resides in the secreted. It is found in the cell wall. Its subcellular location is the cell junction. It localises to the plasmodesma. The protein localises to the golgi apparatus. The enzyme catalyses UDP-beta-L-arabinofuranose = UDP-beta-L-arabinopyranose. In terms of biological role, probable UDP-L-arabinose mutase involved in the biosynthesis of cell wall non-cellulosic polysaccharides. This chain is Probable UDP-arabinopyranose mutase 1, found in Phoenix dactylifera (Date palm).